A 142-amino-acid chain; its full sequence is Hemoglobin subunit alpha (142 aa).

Positions 2-142 (VLSDADKTHV…VATVLTSKYR (141 aa)) constitute a Globin domain. Ser4 carries the post-translational modification Phosphoserine. Position 8 is an N6-succinyllysine (Lys8). Thr9 carries the post-translational modification Phosphothreonine. Lys12 carries the post-translational modification N6-succinyllysine. An N6-acetyllysine; alternate modification is found at Lys17. Lys17 bears the N6-succinyllysine; alternate mark. Phosphotyrosine is present on Tyr25. Ser36 carries the post-translational modification Phosphoserine. Residue Lys41 is modified to N6-succinyllysine. Ser50 carries the post-translational modification Phosphoserine. His59 contacts O2. His88 is a heme b binding site. A Phosphoserine modification is found at Ser103. Thr109 is modified (phosphothreonine). Phosphoserine is present on residues Ser125 and Ser132. Residues Thr135 and Thr138 each carry the phosphothreonine modification. The residue at position 139 (Ser139) is a Phosphoserine.

It belongs to the globin family. Heterotetramer of two alpha chains and two beta chains. Red blood cells.

Its function is as follows. Involved in oxygen transport from the lung to the various peripheral tissues. Functionally, hemopressin acts as an antagonist peptide of the cannabinoid receptor CNR1. Hemopressin-binding efficiently blocks cannabinoid receptor CNR1 and subsequent signaling. This Dasyurus viverrinus (Eastern quoll) protein is Hemoglobin subunit alpha (HBA).